Reading from the N-terminus, the 924-residue chain is Protein translocase subunit SecA (924 aa).

ATP-binding positions include Gln87, 105–109, and Asp515; that span reads GEGKT. Positions 908, 910, 919, and 920 each coordinate Zn(2+).

The protein belongs to the SecA family. Monomer and homodimer. Part of the essential Sec protein translocation apparatus which comprises SecA, SecYEG and auxiliary proteins SecDF-YajC and YidC. Zn(2+) serves as cofactor.

The protein localises to the cell inner membrane. It is found in the cytoplasm. The catalysed reaction is ATP + H2O + cellular proteinSide 1 = ADP + phosphate + cellular proteinSide 2.. Its function is as follows. Part of the Sec protein translocase complex. Interacts with the SecYEG preprotein conducting channel. Has a central role in coupling the hydrolysis of ATP to the transfer of proteins into and across the cell membrane, serving both as a receptor for the preprotein-SecB complex and as an ATP-driven molecular motor driving the stepwise translocation of polypeptide chains across the membrane. This Cupriavidus pinatubonensis (strain JMP 134 / LMG 1197) (Cupriavidus necator (strain JMP 134)) protein is Protein translocase subunit SecA.